A 397-amino-acid polypeptide reads, in one-letter code: Elongation factor Tu-1 (397 aa).

One can recognise a tr-type G domain in the interval 10–206 (KPHVNIGTIG…AVDESIPEPE (197 aa)). Residues 19–26 (GHIDHGKT) form a G1 region. Residue 19–26 (GHIDHGKT) participates in GTP binding. Position 26 (Thr26) interacts with Mg(2+). A G2 region spans residues 62–66 (GITIS). The G3 stretch occupies residues 83–86 (DCPG). GTP-binding positions include 83 to 87 (DCPGH) and 138 to 141 (NKAD). The G4 stretch occupies residues 138–141 (NKAD). Residues 176–178 (SAL) are G5.

It belongs to the TRAFAC class translation factor GTPase superfamily. Classic translation factor GTPase family. EF-Tu/EF-1A subfamily. Monomer.

It is found in the cytoplasm. It carries out the reaction GTP + H2O = GDP + phosphate + H(+). GTP hydrolase that promotes the GTP-dependent binding of aminoacyl-tRNA to the A-site of ribosomes during protein biosynthesis. This Streptomyces ramocissimus protein is Elongation factor Tu-1.